The following is a 166-amino-acid chain: Large ribosomal subunit protein uL11x (166 aa).

The protein belongs to the universal ribosomal protein uL11 family.

Functionally, binds directly to 26S ribosomal RNA. The sequence is that of Large ribosomal subunit protein uL11x (RPL12C) from Arabidopsis thaliana (Mouse-ear cress).